We begin with the raw amino-acid sequence, 380 residues long: Deoxyguanosinetriphosphate triphosphohydrolase-like protein (380 aa).

Positions 1-28 are disordered; it reads MYAPYATMPDRSRGRAVPEEESSFRSPF. The HD domain maps to 62 to 198; that stretch reads RLTHSIEVGQ…AALADDIAYN (137 aa).

Belongs to the dGTPase family. Type 2 subfamily.

The protein is Deoxyguanosinetriphosphate triphosphohydrolase-like protein of Ruegeria sp. (strain TM1040) (Silicibacter sp.).